The sequence spans 591 residues: Oligopeptide-binding protein OppA (591 aa).

It belongs to the bacterial solute-binding protein 5 family. The complex is composed of an ATP-binding protein (OppD), two transmembrane proteins (OppB and OppC) and a solute-binding protein (OppA).

It localises to the periplasm. In terms of biological role, part of the ABC transporter complex OppABCD involved in the uptake of oligopeptides. Peptide-binding protein that shows broad specificity but a moderate preference for hydrophobic oligopeptides and those that are 6-16 amino acids long. The protein is Oligopeptide-binding protein OppA of Mycobacterium bovis (strain ATCC BAA-935 / AF2122/97).